Consider the following 27-residue polypeptide: thr operon leader peptide (27 aa).

Belongs to the thr operon leader peptide family.

Its function is as follows. This protein is involved in control of the biosynthesis of threonine. The sequence is that of thr operon leader peptide from Escherichia coli O157:H7.